A 928-amino-acid polypeptide reads, in one-letter code: Mitogen-activated protein kinase kinase kinase dlk-1 (928 aa).

The interval 1 to 72 (MTSTTMVTTL…GQKEGSPDPK (72 aa)) is disordered. A compositionally biased stretch (polar residues) spans 42–52 (LVTQSAPNTPI). The span at 53-69 (QHREQANAEFGQKEGSP) shows a compositional bias: basic and acidic residues. Residues 135–377 (ISELEWLGSG…FSHIRQHWEI (243 aa)) enclose the Protein kinase domain. Residues 141-149 (LGSGSQGAV) and Lys-162 contribute to the ATP site. Asp-246 serves as the catalytic Proton acceptor. The interval 459-480 (LQGCFTELKLKESELAEWEKDL) is leucine-zipper. Disordered regions lie at residues 483 to 575 (REQW…DAIR), 644 to 696 (RRVS…PSRN), and 802 to 845 (ENAN…SMES). Over residues 509–519 (GYDDMSSDEDV) the composition is skewed to acidic residues. The span at 530-557 (SNTSSSSGVQSSPFSRQSSSRSSAGQQT) shows a compositional bias: low complexity. The important for interaction between isoform a and isoform c stretch occupies residues 605–814 (SAGAGSCTAI…NDVDLTSSMD (210 aa)). The span at 647 to 656 (STSVNKSTAV) shows a compositional bias: polar residues. The segment covering 677 to 695 (SCSSPRSSSKLNRSSYPSR) has biased composition (low complexity). Residues 823–833 (ADVESSEEDEG) show a composition bias toward acidic residues. Phosphoserine is present on residues Ser-874 and Ser-878. Residues 874-879 (SDGLSD) carry the SDGLSD hexapeptide motif.

It belongs to the protein kinase superfamily. STE Ser/Thr protein kinase family. MAP kinase kinase kinase subfamily. In terms of assembly, homooligomer (via leucine zipper domain and hexapeptide motif). Isoform a (via leucine zipper domain) forms a heterooligomer with isoform c (via leucine zipper domain). Isoform c does not self-associate. The cofactor is Mg(2+). Ubiquitinated by rpm-1. Negatively regulated by ubiquitination by fsn-1 bound rpm-1, followed by degradation. In terms of processing, phosphorylation at Ser-874 and/or at Ser-878 abolishes interaction with isoform c and promotes binding to isoform a kinase domain (likely in trans) resulting in isoform a self-association and activation. As to expression, expressed in nerve ring, nerve cord, neurons, and pharynx.

The protein localises to the synapse. It is found in the cytoplasm. The protein resides in the cell projection. It localises to the axon. Its subcellular location is the dendrite. The protein localises to the cilium. The catalysed reaction is L-seryl-[protein] + ATP = O-phospho-L-seryl-[protein] + ADP + H(+). It catalyses the reaction L-threonyl-[protein] + ATP = O-phospho-L-threonyl-[protein] + ADP + H(+). Its activity is regulated as follows. Inactive when associated with isoform c. Dissociation from isoform c, which is dependent on the phosphorylation of the C-terminal hexapeptide, results in self-association and activation. Transient increase in Ca(2+) levels caused by axonal injury or synaptic activity triggers the dissociation of isoform a from isoform c; the dissociation may be influenced by the phosphorylation status of the C-terminal hexapeptide. Component of a MAP kinase pathway that functions presynaptically to regulate synaptic architecture and presynaptic differentiation. Phosphorylates and activates mkk-4. Has a role in axonal regrowth following injury and synaptogenesis. Plays a role in modulating polymerization of neuronal microtubules. Also promotes tubulin post-translational modifications that protect microtubules. Plays a role in cilium length regulation, possibly by reducing rab-5 mediated endocytosis, and may also have a role in intraflagellar transport in cilia. Plays a role in the formation of muscle connections, also called muscle arm extensions, between the body wall and the motor axons in the dorsal and ventral cord. Functionally, has a role in synapse and axon development, and in axonal regrowth following injury. In terms of biological role, by forming heterooligomers with isoform a, acts as an inhibitor of isoform a activation. Its inhibitory function is independent of its catalytic activity. The protein is Mitogen-activated protein kinase kinase kinase dlk-1 (dlk-1) of Caenorhabditis elegans.